The chain runs to 212 residues: Redox-sensing transcriptional repressor Rex (212 aa).

A DNA-binding region (H-T-H motif) is located at residues 17–56; sequence LYARSLRYLLEEGVHSVSSQELGERINVTAAQIRKDLSYF. 91–96 lines the NAD(+) pocket; the sequence is GIGLLG.

Belongs to the transcriptional regulatory Rex family. As to quaternary structure, homodimer.

The protein resides in the cytoplasm. Functionally, modulates transcription in response to changes in cellular NADH/NAD(+) redox state. This Chloroflexus aurantiacus (strain ATCC 29366 / DSM 635 / J-10-fl) protein is Redox-sensing transcriptional repressor Rex.